The sequence spans 74 residues: Conotoxin TsMLCL-04 (74 aa).

The first 19 residues, 1-19 (MLCLPVFIILLLLASPAAP), serve as a signal peptide directing secretion. A propeptide spanning residues 20-60 (NPLETRIQRDLIRAALEDADMKTNERFLEGVISTIKDFAGK) is cleaved from the precursor.

The protein belongs to the conotoxin T superfamily. Post-translationally, contains 2 disulfide bonds that can be either 'C1-C3, C2-C4' or 'C1-C4, C2-C3', since these disulfide connectivities have been observed for conotoxins with cysteine framework V (for examples, see AC P0DQQ7 and AC P81755). As to expression, expressed by the venom duct.

It localises to the secreted. This Conus tessulatus (Tessellate cone) protein is Conotoxin TsMLCL-04.